The sequence spans 375 residues: Succinyl-diaminopimelate desuccinylase (375 aa).

His-66 is a Zn(2+) binding site. Asp-68 is a catalytic residue. Asp-99 contributes to the Zn(2+) binding site. Residue Glu-133 is the Proton acceptor of the active site. 3 residues coordinate Zn(2+): Glu-134, Glu-162, and His-348.

It belongs to the peptidase M20A family. DapE subfamily. Homodimer. It depends on Zn(2+) as a cofactor. Co(2+) serves as cofactor.

The catalysed reaction is N-succinyl-(2S,6S)-2,6-diaminopimelate + H2O = (2S,6S)-2,6-diaminopimelate + succinate. It functions in the pathway amino-acid biosynthesis; L-lysine biosynthesis via DAP pathway; LL-2,6-diaminopimelate from (S)-tetrahydrodipicolinate (succinylase route): step 3/3. Its function is as follows. Catalyzes the hydrolysis of N-succinyl-L,L-diaminopimelic acid (SDAP), forming succinate and LL-2,6-diaminopimelate (DAP), an intermediate involved in the bacterial biosynthesis of lysine and meso-diaminopimelic acid, an essential component of bacterial cell walls. This Shigella boydii serotype 18 (strain CDC 3083-94 / BS512) protein is Succinyl-diaminopimelate desuccinylase.